Reading from the N-terminus, the 137-residue chain is Phosphoribosyl-AMP cyclohydrolase (137 aa).

D84 contributes to the Mg(2+) binding site. Residue C85 participates in Zn(2+) binding. 2 residues coordinate Mg(2+): D86 and D88. The Zn(2+) site is built by C101 and C108.

The protein belongs to the PRA-CH family. Homodimer. Mg(2+) is required as a cofactor. It depends on Zn(2+) as a cofactor.

The protein localises to the cytoplasm. The catalysed reaction is 1-(5-phospho-beta-D-ribosyl)-5'-AMP + H2O = 1-(5-phospho-beta-D-ribosyl)-5-[(5-phospho-beta-D-ribosylamino)methylideneamino]imidazole-4-carboxamide. The protein operates within amino-acid biosynthesis; L-histidine biosynthesis; L-histidine from 5-phospho-alpha-D-ribose 1-diphosphate: step 3/9. Its function is as follows. Catalyzes the hydrolysis of the adenine ring of phosphoribosyl-AMP. The sequence is that of Phosphoribosyl-AMP cyclohydrolase from Chlorobium limicola (strain DSM 245 / NBRC 103803 / 6330).